The following is an 83-amino-acid chain: Small ribosomal subunit protein bS16 (83 aa).

This sequence belongs to the bacterial ribosomal protein bS16 family.

This chain is Small ribosomal subunit protein bS16, found in Shewanella woodyi (strain ATCC 51908 / MS32).